Reading from the N-terminus, the 168-residue chain is Mitochondrial ATP-independent inner membrane protease subunit 1a (168 aa).

Residues 1-47 constitute a mitochondrion transit peptide; it reads MRMTFLSYLKQWRGTAKEAFENVSIVAKFLCLLHVTDRYIISTTHVH. Catalysis depends on residues Ser50 and Lys94.

It belongs to the peptidase S26 family. IMP1 subfamily. Heterodimer of 2 subunits, IMP1A/B and IMP12.

Its subcellular location is the mitochondrion inner membrane. Functionally, catalyzes the removal of transit peptides required for the targeting of proteins from the mitochondrial matrix, across the inner membrane, into the inter-membrane space. The polypeptide is Mitochondrial ATP-independent inner membrane protease subunit 1a (Arabidopsis thaliana (Mouse-ear cress)).